The following is a 332-amino-acid chain: 1-acyl-sn-glycerol-3-phosphate acyltransferase CHLREDRAFT_174358 (332 aa).

A helical transmembrane segment spans residues 96 to 116 (FLLSLPLFVTMMVMAPLVLAF). The short motif at 163 to 168 (HQSFLD) is the HXXXXD motif element. Residues 185–205 (TSNFLIPIIGWSMFLTGHVMI) traverse the membrane as a helical segment. The short motif at 235–238 (EGTR) is the EGTR motif element.

It belongs to the 1-acyl-sn-glycerol-3-phosphate acyltransferase family.

It is found in the membrane. It catalyses the reaction a 1-acyl-sn-glycero-3-phosphate + an acyl-CoA = a 1,2-diacyl-sn-glycero-3-phosphate + CoA. Its pathway is phospholipid metabolism; CDP-diacylglycerol biosynthesis; CDP-diacylglycerol from sn-glycerol 3-phosphate: step 2/3. Its function is as follows. Converts lysophosphatidic acid (LPA) into phosphatidic acid by incorporating an acyl moiety at the sn-2 position of the glycerol backbone. The sequence is that of 1-acyl-sn-glycerol-3-phosphate acyltransferase CHLREDRAFT_174358 from Chlamydomonas reinhardtii (Chlamydomonas smithii).